Reading from the N-terminus, the 126-residue chain is Large ribosomal subunit protein bL12 (126 aa).

It belongs to the bacterial ribosomal protein bL12 family. In terms of assembly, homodimer. Part of the ribosomal stalk of the 50S ribosomal subunit. Forms a multimeric L10(L12)X complex, where L10 forms an elongated spine to which 2 to 4 L12 dimers bind in a sequential fashion. Binds GTP-bound translation factors.

In terms of biological role, forms part of the ribosomal stalk which helps the ribosome interact with GTP-bound translation factors. Is thus essential for accurate translation. This chain is Large ribosomal subunit protein bL12, found in Tropheryma whipplei (strain TW08/27) (Whipple's bacillus).